The chain runs to 128 residues: 3-aminoacrylate deaminase RutC (128 aa).

The protein belongs to the RutC family.

The catalysed reaction is (Z)-3-aminoacrylate + H2O + H(+) = 3-oxopropanoate + NH4(+). Involved in pyrimidine catabolism. Catalyzes the deamination of 3-aminoacrylate to malonic semialdehyde, a reaction that can also occur spontaneously. RutC may facilitate the reaction and modulate the metabolic fitness, rather than catalyzing essential functions. The protein is 3-aminoacrylate deaminase RutC of Serratia proteamaculans (strain 568).